The sequence spans 136 residues: Glutamyl-tRNA(Gln) amidotransferase subunit C, mitochondrial (136 aa).

The N-terminal 27 residues, 1–27 (MWARAVHLGLRAAARGRRGFTSKADPQ), are a transit peptide targeting the mitochondrion.

It belongs to the GatC family. Subunit of the heterotrimeric GatCAB amidotransferase (AdT) complex, composed of A (QRSL1), B (GATB) and C (GATC) subunits.

The protein resides in the mitochondrion. The catalysed reaction is L-glutamyl-tRNA(Gln) + L-glutamine + ATP + H2O = L-glutaminyl-tRNA(Gln) + L-glutamate + ADP + phosphate + H(+). Allows the formation of correctly charged Gln-tRNA(Gln) through the transamidation of misacylated Glu-tRNA(Gln) in the mitochondria. The reaction takes place in the presence of glutamine and ATP through an activated gamma-phospho-Glu-tRNA(Gln). The polypeptide is Glutamyl-tRNA(Gln) amidotransferase subunit C, mitochondrial (Bos taurus (Bovine)).